The following is an 838-amino-acid chain: Axin-2 (838 aa).

Positions 1–75 (MSSAVLVTLL…EGRASPDSPL (75 aa)) are disordered. Positions 21-30 (APRPPVPGEE) match the Tankyrase-binding motif motif. Residues 42-55 (KVQSTKPMPVSSNA) show a composition bias toward polar residues. The segment covering 56–69 (RRNEDGLGEPEGRA) has biased composition (basic and acidic residues). The region spanning 81–200 (SLHSLLGDQD…LTSDIYLEYV (120 aa)) is the RGS domain. Disordered regions lie at residues 300–333 (SELSSDALTDDSMSMTDSSVDGIPPYRMGSKKQL), 398–435 (IREDEEKEGSEQALSSRDGAPVQHPLALLPSGSYEEDP), 450–483 (PGCQSPGVGRYSPRSRSPDHHHHHHQQCHALLPT), 568–682 (GSRG…AMPP), and 712–744 (VASQQRDRNHPATGQAGPTSFSNPSLASEDHKE). The segment covering 303 to 318 (SSDALTDDSMSMTDSS) has biased composition (low complexity). The interaction with GSK3B stretch occupies residues 327–413 (MGSKKQLQRE…KEGSEQALSS (87 aa)). An interaction with beta-catenin region spans residues 413–476 (SRDGAPVQHP…PDHHHHHHQQ (64 aa)). Positions 727–737 (AGPTSFSNPSL) are enriched in polar residues. A DIX domain is found at 756 to 838 (ASELIVTYFF…RILGKVERID (83 aa)).

As to quaternary structure, interacts with SMAD7 and RNF111. Interacts with ANKRD6. Interacts with glycogen synthase kinase-3 beta (GSK3B) and beta-catenin. The interaction between axin and beta-catenin occurs via the armadillo repeats contained in beta-catenin. Interacts with SIAH1. Interacts with SIAH2. In terms of processing, ADP-ribosylated by tankyrase TNKS and TNKS2. Poly-ADP-ribosylated protein is recognized by RNF146, followed by ubiquitination and subsequent activation of the Wnt signaling pathway. Post-translationally, ubiquitinated by RNF146 when poly-ADP-ribosylated, leading to its degradation and subsequent activation of the Wnt signaling pathway. Deubiquitinated by USP34, deubiquitinated downstream of beta-catenin stabilization step: deubiquitination is important Wnt signaling to positively regulate beta-catenin (CTNBB1)-mediated transcription. Probably phosphorylated by GSK3B and dephosphorylated by PP2A. As to expression, expressed in lung and thymus.

Its subcellular location is the cytoplasm. Its function is as follows. Inhibitor of the Wnt signaling pathway. Down-regulates beta-catenin. Probably facilitate the phosphorylation of beta-catenin and APC by GSK3B. The protein is Axin-2 (Axin2) of Rattus norvegicus (Rat).